An 88-amino-acid chain; its full sequence is Small ribosomal subunit protein uS17 (88 aa).

The protein belongs to the universal ribosomal protein uS17 family. In terms of assembly, part of the 30S ribosomal subunit.

Functionally, one of the primary rRNA binding proteins, it binds specifically to the 5'-end of 16S ribosomal RNA. The sequence is that of Small ribosomal subunit protein uS17 from Prochlorococcus marinus (strain NATL1A).